The primary structure comprises 370 residues: Mitochondrial carrier protein SCaMC-3L (370 aa).

Solcar repeat units follow at residues 90-176 (EALW…CKNY), 184-269 (PPFQ…LQCF), and 280-367 (PSGL…MKKT). A run of 6 helical transmembrane segments spans residues 96–113 (LLSGAMAGAVSRTGTAPL), 151–170 (GNGINVLKIAPEYAIKFSVF), 194–207 (SLAVAISQTLINPM), 245–263 (YLPNMLGIIPYACTDLAVY), 282–306 (GLVSLSSVTLSTTCGQMASYPLTLV), and 342–361 (GMTPTLLKVLPAGGISYVVY).

This sequence belongs to the mitochondrial carrier (TC 2.A.29) family.

The protein resides in the mitochondrion inner membrane. It catalyses the reaction Mg(2+)(out) + phosphate(in) + ATP(out) = Mg(2+)(in) + phosphate(out) + ATP(in). It carries out the reaction ADP(out) + phosphate(in) + H(+)(out) = ADP(in) + phosphate(out) + H(+)(in). Functionally, calcium-independent ATP-Mg/Pi exchanger that catalyzes the electroneutral exchange of Mg-ATP or free ADP against an hydrogenphosphate and participates in the net transport of adenine nucleotides across the mitochondria inner membrane. The chain is Mitochondrial carrier protein SCaMC-3L from Homo sapiens (Human).